The chain runs to 306 residues: Ribonuclease Z (306 aa).

7 residues coordinate Zn(2+): His-63, His-65, Asp-67, His-68, His-141, Asp-208, and His-266. Residue Asp-67 is the Proton acceptor of the active site.

The protein belongs to the RNase Z family. In terms of assembly, homodimer. Zn(2+) is required as a cofactor.

The enzyme catalyses Endonucleolytic cleavage of RNA, removing extra 3' nucleotides from tRNA precursor, generating 3' termini of tRNAs. A 3'-hydroxy group is left at the tRNA terminus and a 5'-phosphoryl group is left at the trailer molecule.. Zinc phosphodiesterase, which displays some tRNA 3'-processing endonuclease activity. Probably involved in tRNA maturation, by removing a 3'-trailer from precursor tRNA. The sequence is that of Ribonuclease Z from Protochlamydia amoebophila (strain UWE25).